Here is a 488-residue protein sequence, read N- to C-terminus: MSFLPGMTPVTLSNFSWALEDRMLEGNSTTTPTRQLMPLVVVLSSVSLVTVALNLLVLYAVRSERKLHTVGNLYIVSLSVADLIVGAVVMPMSILYLHRSAWILGRPLCLFWLSMDYVASTASIFSVFILCIDRYRSVQQPLRYLRYRTKTRASATILGAWLLSFLWVIPILGWHHFMAPTSEPREKKCETDFYDVTWFKVMTAIINFYLPTLLMLWFYIRIYKAVRRHCQHRQLINSSLPSFSEMKLKLENAKVDTRRMGKESPWEDPKRCSKDASGVHTPMPSSQHLVDMPCAAVLSEDEGGEVGTRQMPMLAVGDGRCCEALNHMHSQLELSGQSRATHSISARPEEWTVVDGQSFPITDSDTSTEAAPMGGQPRSGSNSGLDYIKFTWRRLRSHSRQYTSGLHLNRERKAAKQLGCIMAAFILCWIPYFVFFMVIAFCKSCSNEPVHMFTIWLGYLNSTLNPLIYPLCNENFRKTFKRILRIPP.

Residues 1–38 lie on the Extracellular side of the membrane; that stretch reads MSFLPGMTPVTLSNFSWALEDRMLEGNSTTTPTRQLMP. 2 N-linked (GlcNAc...) asparagine glycosylation sites follow: asparagine 14 and asparagine 27. The helical transmembrane segment at 39–59 threads the bilayer; the sequence is LVVVLSSVSLVTVALNLLVLY. Residues 60–73 are Cytoplasmic-facing; sequence AVRSERKLHTVGNL. A helical membrane pass occupies residues 74-98; it reads YIVSLSVADLIVGAVVMPMSILYLH. At 99 to 106 the chain is on the extracellular side; the sequence is RSAWILGR. The helical transmembrane segment at 107-132 threads the bilayer; that stretch reads PLCLFWLSMDYVASTASIFSVFILCI. An intrachain disulfide couples cysteine 109 to cysteine 189. The histamine site is built by aspartate 116 and threonine 121. An important for agonist binding region spans residues 116-121; it reads DYVAST. The Cytoplasmic portion of the chain corresponds to 133-153; that stretch reads DRYRSVQQPLRYLRYRTKTRA. Phosphothreonine is present on residues threonine 149 and threonine 151. The chain crosses the membrane as a helical span at residues 154-173; sequence SATILGAWLLSFLWVIPILG. Residues 174 to 197 lie on the Extracellular side of the membrane; it reads WHHFMAPTSEPREKKCETDFYDVT. The helical transmembrane segment at 198–220 threads the bilayer; that stretch reads WFKVMTAIINFYLPTLLMLWFYI. A histamine-binding site is contributed by asparagine 207. Residues 221-417 are Cytoplasmic-facing; that stretch reads RIYKAVRRHC…LNRERKAAKQ (197 aa). At serine 239 the chain carries Phosphoserine. Over residues 259-274 the composition is skewed to basic and acidic residues; sequence RMGKESPWEDPKRCSK. The interval 259-285 is disordered; sequence RMGKESPWEDPKRCSKDASGVHTPMPS. Phosphoserine is present on residues serine 345, serine 381, serine 383, serine 397, and serine 399. The chain crosses the membrane as a helical span at residues 418 to 441; sequence LGCIMAAFILCWIPYFVFFMVIAF. Positions 425–429 are important for agonist binding; that stretch reads FILCW. Histamine is bound at residue tyrosine 432. Cysteine 442 and cysteine 445 are disulfide-bonded. Residues 442–447 are Extracellular-facing; that stretch reads CKSCSN. A helical membrane pass occupies residues 448–470; sequence EPVHMFTIWLGYLNSTLNPLIYP. At 471–488 the chain is on the cytoplasmic side; the sequence is LCNENFRKTFKRILRIPP.

Belongs to the G-protein coupled receptor 1 family. Post-translationally, phosphorylation at sites in the second and third cytoplasmic loops independently contribute to agonist-induced receptor down-regulation.

It is found in the cell membrane. G-protein-coupled receptor for histamine, a biogenic amine that functions as an immune modulator and a neurotransmitter. Through the H1 receptor, histamine mediates the contraction of smooth muscles and increases capillary permeability due to contraction of terminal venules. Also mediates neurotransmission in the central nervous system and thereby regulates circadian rhythms, emotional and locomotor activities as well as cognitive functions. The chain is Histamine H1 receptor from Cavia porcellus (Guinea pig).